Consider the following 397-residue polypeptide: Ribosomal RNA large subunit methyltransferase I (397 aa).

The region spanning 2–81 (STTVYLQKDR…EQIDTEFFVR (80 aa)) is the PUA domain.

It belongs to the methyltransferase superfamily. RlmI family.

It localises to the cytoplasm. The catalysed reaction is cytidine(1962) in 23S rRNA + S-adenosyl-L-methionine = 5-methylcytidine(1962) in 23S rRNA + S-adenosyl-L-homocysteine + H(+). Its function is as follows. Specifically methylates the cytosine at position 1962 (m5C1962) of 23S rRNA. The protein is Ribosomal RNA large subunit methyltransferase I of Tolumonas auensis (strain DSM 9187 / NBRC 110442 / TA 4).